Consider the following 27-residue polypeptide: Ganodermin (27 aa).

Has antifungal activity against B.cinera, F.oxysporum and P.piricola with IC(50) values of 15.2 uM, 12.4 uM and 18.1 uM, respectively. Lacks hemagglutinating activity towards rabbit erythrocytes. Lacks deoxyribonuclease, ribonuclease and protease inhibitory activities. The chain is Ganodermin from Ganoderma lucidum (Ling zhi medicinal fungus).